We begin with the raw amino-acid sequence, 245 residues long: tRNA pseudouridine synthase A (245 aa).

Aspartate 52 (nucleophile) is an active-site residue. Residue tyrosine 112 coordinates substrate.

The protein belongs to the tRNA pseudouridine synthase TruA family. Homodimer.

The catalysed reaction is uridine(38/39/40) in tRNA = pseudouridine(38/39/40) in tRNA. Formation of pseudouridine at positions 38, 39 and 40 in the anticodon stem and loop of transfer RNAs. This chain is tRNA pseudouridine synthase A, found in Dictyoglomus turgidum (strain DSM 6724 / Z-1310).